The primary structure comprises 468 residues: Probable Xaa-Pro aminopeptidase PEPP (468 aa).

Aspartate 264, aspartate 275, glutamate 398, and glutamate 438 together coordinate Mn(2+).

This sequence belongs to the peptidase M24B family. Mn(2+) is required as a cofactor.

It catalyses the reaction Release of any N-terminal amino acid, including proline, that is linked to proline, even from a dipeptide or tripeptide.. Functionally, catalyzes the removal of a penultimate prolyl residue from the N-termini of peptides. This chain is Probable Xaa-Pro aminopeptidase PEPP (PEPP), found in Paracoccidioides lutzii (strain ATCC MYA-826 / Pb01) (Paracoccidioides brasiliensis).